A 31-amino-acid polypeptide reads, in one-letter code: GTFPCGESCVFIPCLTSAIGCSCKSKVCYKN.

The cyclopeptide (Gly-Asn) cross-link spans 1–31 (GTFPCGESCVFIPCLTSAIGCSCKSKVCYKN). Disulfide bonds link C5–C21, C9–C23, and C14–C28.

This is a cyclic peptide.

Its function is as follows. Probably participates in a plant defense mechanism. Has cytotoxic activity, active against a human lymphoma cell line with an IC(50) of 0.96 uM. The protein is Cyclotide vibi-G of Viola biflora (Yellow wood violet).